A 320-amino-acid polypeptide reads, in one-letter code: Methylenetetrahydrofolate dehydrogenase [NAD(+)] (320 aa).

Cys150 is an active-site residue. NAD(+) is bound by residues 185–186 (RS), 208–209 (DV), and 274–276 (FAC).

This sequence belongs to the tetrahydrofolate dehydrogenase/cyclohydrolase family. As to quaternary structure, homodimer. The N-terminus is blocked.

The protein resides in the cytoplasm. Its subcellular location is the nucleus. It catalyses the reaction (6R)-5,10-methylene-5,6,7,8-tetrahydrofolate + NAD(+) = (6R)-5,10-methenyltetrahydrofolate + NADH. In terms of biological role, catalyzes oxidation of cytoplasmic one-carbon units for purine biosynthesis. This Saccharomyces cerevisiae (strain ATCC 204508 / S288c) (Baker's yeast) protein is Methylenetetrahydrofolate dehydrogenase [NAD(+)] (MTD1).